Here is a 97-residue protein sequence, read N- to C-terminus: Protein C4 (97 aa).

Disordered regions lie at residues 1–31 (MGLL…PHTG) and 75–97 (ANLP…PSIY). Glycine 2 carries N-myristoyl glycine; by host lipidation. Positions 77–88 (LPTTHMPRQSIQ) are enriched in polar residues.

The protein belongs to the geminiviridae protein AC4/C4 family.

It is found in the host cell membrane. In terms of biological role, pathogenicity determinant. May act as a suppressor of RNA-mediated gene silencing, also known as post-transcriptional gene silencing (PTGS), a mechanism of plant viral defense that limits the accumulation of viral RNAs. The polypeptide is Protein C4 (Tomato yellow leaf curl China virus (TYLCCNV)).